Consider the following 214-residue polypeptide: Probable transaldolase (214 aa).

K83 (schiff-base intermediate with substrate) is an active-site residue.

Belongs to the transaldolase family. Type 3B subfamily.

It is found in the cytoplasm. The enzyme catalyses D-sedoheptulose 7-phosphate + D-glyceraldehyde 3-phosphate = D-erythrose 4-phosphate + beta-D-fructose 6-phosphate. It participates in carbohydrate degradation; pentose phosphate pathway; D-glyceraldehyde 3-phosphate and beta-D-fructose 6-phosphate from D-ribose 5-phosphate and D-xylulose 5-phosphate (non-oxidative stage): step 2/3. Functionally, transaldolase is important for the balance of metabolites in the pentose-phosphate pathway. The sequence is that of Probable transaldolase from Thermodesulfovibrio yellowstonii (strain ATCC 51303 / DSM 11347 / YP87).